Consider the following 256-residue polypeptide: uncharacterized protein (256 aa).

The disordered stretch occupies residues 1 to 23 (MIPPCENAPHIIYHESQRGTRDR). Residues 12–23 (IYHESQRGTRDR) show a composition bias toward basic and acidic residues.

This is an uncharacterized protein from Homo sapiens (Human).